Reading from the N-terminus, the 242-residue chain is Leucyl/phenylalanyl-tRNA--protein transferase (242 aa).

This sequence belongs to the L/F-transferase family.

It localises to the cytoplasm. It catalyses the reaction N-terminal L-lysyl-[protein] + L-leucyl-tRNA(Leu) = N-terminal L-leucyl-L-lysyl-[protein] + tRNA(Leu) + H(+). The catalysed reaction is N-terminal L-arginyl-[protein] + L-leucyl-tRNA(Leu) = N-terminal L-leucyl-L-arginyl-[protein] + tRNA(Leu) + H(+). It carries out the reaction L-phenylalanyl-tRNA(Phe) + an N-terminal L-alpha-aminoacyl-[protein] = an N-terminal L-phenylalanyl-L-alpha-aminoacyl-[protein] + tRNA(Phe). Functions in the N-end rule pathway of protein degradation where it conjugates Leu, Phe and, less efficiently, Met from aminoacyl-tRNAs to the N-termini of proteins containing an N-terminal arginine or lysine. The polypeptide is Leucyl/phenylalanyl-tRNA--protein transferase (Edwardsiella ictaluri (strain 93-146)).